The primary structure comprises 562 residues: Calmodulin-binding protein 60 F (562 aa).

Residues 1–22 (MENSMNNRGHGHNQEHADNLPE) form a disordered region. The segment at 5–84 (MNNRGHGHNQ…STSRSTEPNK (80 aa)) is calmodulin-binding. The segment covering 12–22 (HNQEHADNLPE) has biased composition (basic and acidic residues). Residues 154 to 273 (EDDKDWTREH…ALHKKLLKSN (120 aa)) are DNA-binding.

This sequence belongs to the plant ACBP60 protein family. As to quaternary structure, interacts with calmodulin (CaM).

Its subcellular location is the nucleus. In terms of biological role, transcription activator that binds DNA in a sequence-specific manner, likely 5'-GAAATTTTGG-3', to promote the expression of target genes. The sequence is that of Calmodulin-binding protein 60 F from Arabidopsis thaliana (Mouse-ear cress).